The following is a 138-amino-acid chain: Large ribosomal subunit protein uL16 (138 aa).

Positions 1-17 (MLIPRRVKHRKQHHPTR) are enriched in basic residues. The tract at residues 1–24 (MLIPRRVKHRKQHHPTRRGAASGG) is disordered.

Belongs to the universal ribosomal protein uL16 family. As to quaternary structure, part of the 50S ribosomal subunit.

In terms of biological role, binds 23S rRNA and is also seen to make contacts with the A and possibly P site tRNAs. This Kineococcus radiotolerans (strain ATCC BAA-149 / DSM 14245 / SRS30216) protein is Large ribosomal subunit protein uL16.